The chain runs to 59 residues: Putative HTH-type transcriptional regulator YneL (59 aa).

The HTH araC/xylS-type domain occupies 1–59 (MSPLRYQKWLRLNEVRRQMLNEHYDVTTAAYAVGYESYPISVGNIRGCLESHPREILPG). Residues 26 to 49 (VTTAAYAVGYESYPISVGNIRGCL) constitute a DNA-binding region (H-T-H motif).

The sequence is that of Putative HTH-type transcriptional regulator YneL (yneL) from Escherichia coli (strain K12).